Consider the following 746-residue polypeptide: UvrABC system protein C (746 aa).

The GIY-YIG domain occupies A18–V97. Positions R211 to V246 constitute a UVR domain. Positions A557 to P577 are disordered.

This sequence belongs to the UvrC family. Interacts with UvrB in an incision complex.

It is found in the cytoplasm. Its function is as follows. The UvrABC repair system catalyzes the recognition and processing of DNA lesions. UvrC both incises the 5' and 3' sides of the lesion. The N-terminal half is responsible for the 3' incision and the C-terminal half is responsible for the 5' incision. The sequence is that of UvrABC system protein C from Bifidobacterium longum (strain NCC 2705).